A 480-amino-acid polypeptide reads, in one-letter code: Ribulose bisphosphate carboxylase large chain (480 aa).

Positions 1 to 2 (MS) are excised as a propeptide. N-acetylproline is present on proline 3. Lysine 14 carries the N6,N6,N6-trimethyllysine modification. Substrate contacts are provided by asparagine 123 and threonine 173. Lysine 175 acts as the Proton acceptor in catalysis. Lysine 177 contacts substrate. Lysine 201, aspartate 203, and glutamate 204 together coordinate Mg(2+). Lysine 201 is subject to N6-carboxylysine. Histidine 294 functions as the Proton acceptor in the catalytic mechanism. Substrate is bound by residues arginine 295, histidine 327, and serine 379.

Belongs to the RuBisCO large chain family. Type I subfamily. In terms of assembly, heterohexadecamer of 8 large chains and 8 small chains; disulfide-linked. The disulfide link is formed within the large subunit homodimers. The cofactor is Mg(2+). The disulfide bond which can form in the large chain dimeric partners within the hexadecamer appears to be associated with oxidative stress and protein turnover.

It is found in the plastid. Its subcellular location is the chloroplast. The catalysed reaction is 2 (2R)-3-phosphoglycerate + 2 H(+) = D-ribulose 1,5-bisphosphate + CO2 + H2O. It catalyses the reaction D-ribulose 1,5-bisphosphate + O2 = 2-phosphoglycolate + (2R)-3-phosphoglycerate + 2 H(+). In terms of biological role, ruBisCO catalyzes two reactions: the carboxylation of D-ribulose 1,5-bisphosphate, the primary event in carbon dioxide fixation, as well as the oxidative fragmentation of the pentose substrate in the photorespiration process. Both reactions occur simultaneously and in competition at the same active site. This is Ribulose bisphosphate carboxylase large chain from Gossypium barbadense (Sea Island cotton).